The chain runs to 503 residues: Efflux pump vrtL (503 aa).

Residues 1-59 (MSKLSDNHSSASEGEKEAGDLESGPTAISSEPSFDDADRDPNLITWDGPKDPENPKNWP) are disordered. An N-linked (GlcNAc...) asparagine glycan is attached at Asn-7. The next 12 membrane-spanning stretches (helical) occupy residues 68–88 (WTVS…APAM), 101–121 (IEIY…PIFF), 133–153 (LLQI…FATT), 162–182 (FLAG…ISDM), 194–214 (VYTL…GFIA), 221–241 (WVFW…FFWL), 295–315 (IVFC…LMFA), 329–349 (PGIG…GLFF), 377–397 (SLAV…WSIG), 401–421 (WIMP…CLQG), 432–454 (TYAA…GFPL), and 471–491 (LLAF…WHFG).

It belongs to the major facilitator superfamily.

The protein resides in the membrane. Its function is as follows. Efflux pump; part of the gene cluster that mediates the biosynthesis of viridicatumtoxin, a tetracycline-like fungal meroterpenoid with a unique, fused spirobicyclic ring system. This is Efflux pump vrtL from Penicillium aethiopicum.